The following is a 671-amino-acid chain: DNA ligase (671 aa).

NAD(+) contacts are provided by residues 32–36 (DAEYD), 81–82 (SL), and Glu113. The active-site N6-AMP-lysine intermediate is the Lys115. Residues Arg136, Glu173, Lys290, and Lys314 each contribute to the NAD(+) site. Zn(2+)-binding residues include Cys408, Cys411, Cys426, and Cys432. The BRCT domain maps to 593-671 (EIDSPFAGKT…EAEMLRLLGS (79 aa)).

It belongs to the NAD-dependent DNA ligase family. LigA subfamily. Mg(2+) is required as a cofactor. Requires Mn(2+) as cofactor.

It catalyses the reaction NAD(+) + (deoxyribonucleotide)n-3'-hydroxyl + 5'-phospho-(deoxyribonucleotide)m = (deoxyribonucleotide)n+m + AMP + beta-nicotinamide D-nucleotide.. Its function is as follows. DNA ligase that catalyzes the formation of phosphodiester linkages between 5'-phosphoryl and 3'-hydroxyl groups in double-stranded DNA using NAD as a coenzyme and as the energy source for the reaction. It is essential for DNA replication and repair of damaged DNA. This is DNA ligase from Shigella sonnei (strain Ss046).